Reading from the N-terminus, the 207-residue chain is LexA repressor (207 aa).

The H-T-H motif DNA-binding region spans 29–49 (VREICSAVDLSSTSTVHGHLA). Active-site for autocatalytic cleavage activity residues include Ser128 and Lys166.

The protein belongs to the peptidase S24 family. As to quaternary structure, homodimer.

The catalysed reaction is Hydrolysis of Ala-|-Gly bond in repressor LexA.. Represses a number of genes involved in the response to DNA damage (SOS response), including recA and lexA. In the presence of single-stranded DNA, RecA interacts with LexA causing an autocatalytic cleavage which disrupts the DNA-binding part of LexA, leading to derepression of the SOS regulon and eventually DNA repair. This Lactobacillus johnsonii (strain CNCM I-12250 / La1 / NCC 533) protein is LexA repressor.